Consider the following 919-residue polypeptide: Valine--tRNA ligase (919 aa).

The short motif at 66 to 76 is the 'HIGH' region element; the sequence is PNVTGQLHMGH. The short motif at 562-566 is the 'KMSKS' region element; it reads KMSKS. Residue lysine 565 participates in ATP binding. The stretch at 852–919 forms a coiled coil; sequence TVDKEAERKR…RISARLEELK (68 aa).

It belongs to the class-I aminoacyl-tRNA synthetase family. ValS type 1 subfamily. Monomer.

It is found in the cytoplasm. It catalyses the reaction tRNA(Val) + L-valine + ATP = L-valyl-tRNA(Val) + AMP + diphosphate. In terms of biological role, catalyzes the attachment of valine to tRNA(Val). As ValRS can inadvertently accommodate and process structurally similar amino acids such as threonine, to avoid such errors, it has a 'posttransfer' editing activity that hydrolyzes mischarged Thr-tRNA(Val) in a tRNA-dependent manner. The chain is Valine--tRNA ligase from Corynebacterium diphtheriae (strain ATCC 700971 / NCTC 13129 / Biotype gravis).